The following is a 565-amino-acid chain: Adenine deaminase (565 aa).

It belongs to the metallo-dependent hydrolases superfamily. Adenine deaminase family. Requires Mn(2+) as cofactor.

It carries out the reaction adenine + H2O + H(+) = hypoxanthine + NH4(+). The polypeptide is Adenine deaminase (Cereibacter sphaeroides (strain ATCC 17025 / ATH 2.4.3) (Rhodobacter sphaeroides)).